Here is a 327-residue protein sequence, read N- to C-terminus: MSETNGGNAARENSEVKQTAVENPIDKLDGTPKRPREKDQDEQAEETSDKSEAPNKNDEEKKEEGKKDQEPSHKKIKVDDGKTVESGIVEDDKKEDKFVFGAASKFGTGFGVAKKDTKDGDATTSTESLPASDSKTKKPFAFGSGLSFGSGFNILKNKTENNSESEKKATDVDKDKVHSGSEQLANASEDTKDKPKPLKLQKQEVKSGEESEECIYQVNAKLYQLSNIKEGWKERGVGIIKINKSKDDVEKTRIVMRSRGILKVILNIQLVKGFTVQKGFTGSLQSEKFIRLLAVDDNGDPAQYAIKTGKKETTDELYNIIVKSVPK.

Disordered regions lie at residues 1 to 96 (MSET…KKED) and 109 to 205 (GFGV…KQEV). Residues 24–83 (PIDKLDGTPKRPREKDQDEQAEETSDKSEAPNKNDEEKKEEGKKDQEPSHKKIKVDDGKT) are compositionally biased toward basic and acidic residues. Thr-31 carries the phosphothreonine modification. The span at 122–133 (ATTSTESLPASD) shows a compositional bias: polar residues. The segment covering 140–152 (FAFGSGLSFGSGF) has biased composition (low complexity). Basic and acidic residues-rich tracts occupy residues 157 to 179 (NKTE…KVHS) and 189 to 205 (EDTK…KQEV). Ser-179 carries the phosphoserine modification. One can recognise a RanBD1 domain in the interval 191–327 (TKDKPKPLKL…YNIIVKSVPK (137 aa)).

Interacts with GSP1, XPO1 and SRM1.

Its subcellular location is the nucleus. In terms of biological role, important for the export of protein containing nuclear export signal (NES) out of the nucleus. Stimulates the GTPase activity of GSP1. The chain is Ran-specific GTPase-activating protein 2 (YRB2) from Saccharomyces cerevisiae (strain ATCC 204508 / S288c) (Baker's yeast).